The chain runs to 215 residues: MTPFTQHTGLVAPLDRANVDTDQIIPKQFLKSIKRTGFGPNLFDEWRYLDIGEPGRDNSTRPLNQEFVLNFPRYQGASVLLARENFGCGSSREHAPWALDEYGFRAVIAPSFADIFYNNSFKNGLLPIVLAEAEMDALFEQCLGNEGYQLTVDLAAQRVRRPDGVEYAFEIDAFRKHCLLNGLDDIGLTLQDADAIGRFEQGHRAQQPWLFGALQ.

Belongs to the LeuD family. LeuD type 1 subfamily. As to quaternary structure, heterodimer of LeuC and LeuD.

It catalyses the reaction (2R,3S)-3-isopropylmalate = (2S)-2-isopropylmalate. Its pathway is amino-acid biosynthesis; L-leucine biosynthesis; L-leucine from 3-methyl-2-oxobutanoate: step 2/4. Its function is as follows. Catalyzes the isomerization between 2-isopropylmalate and 3-isopropylmalate, via the formation of 2-isopropylmaleate. This is 3-isopropylmalate dehydratase small subunit from Xanthomonas campestris pv. campestris (strain 8004).